A 154-amino-acid polypeptide reads, in one-letter code: Protein X (154 aa).

The mitochondrial targeting sequence stretch occupies residues 68–117 (PCALRFTSARRMETTVNAHRNLPKVLHKRTLGLSAMSTTDLEAHFKDCVF).

It belongs to the orthohepadnavirus protein X family. May form homodimer. May interact with host CEBPA, CFLAR, CREB1, DDB1, E4F1, HBXIP, HSPD1/HSP60, NFKBIA, POLR2E and SMAD4. Interacts with host SMC5-SMC6 complex and induces its degradation. Interacts with host TRPC4AP; leading to prevent ubiquitination of TRPC4AP. Interacts with host PLSCR1; this interaction promotes ubiquitination and degradation of HBx and impairs HBx-mediated cell proliferation. A fraction may be phosphorylated in insect cells and HepG2 cells, a human hepatoblastoma cell line. Phosphorylated in vitro by host protein kinase C or mitogen-activated protein kinase. N-acetylated in insect cells.

The protein localises to the host cytoplasm. Its subcellular location is the host nucleus. It localises to the host mitochondrion. In terms of biological role, multifunctional protein that plays a role in silencing host antiviral defenses and promoting viral transcription. Does not seem to be essential for HBV infection. May be directly involved in development of cirrhosis and liver cancer (hepatocellular carcinoma). Most of cytosolic activities involve modulation of cytosolic calcium. The effect on apoptosis is controversial depending on the cell types in which the studies have been conducted. May induce apoptosis by localizing in mitochondria and causing loss of mitochondrial membrane potential. May also modulate apoptosis by binding host CFLAR, a key regulator of the death-inducing signaling complex (DISC). Promotes viral transcription by using the host E3 ubiquitin ligase DDB1 to target the SMC5-SMC6 complex to proteasomal degradation. This host complex would otherwise bind to viral episomal DNA, and prevents its transcription. Moderately stimulates transcription of many different viral and cellular transcription elements. Promoters and enhancers stimulated by HBx contain DNA binding sites for NF-kappa-B, AP-1, AP-2, c-EBP, ATF/CREB, or the calcium-activated factor NF-AT. This chain is Protein X, found in Hepatitis B virus genotype B2 (isolate Indonesia/pIDW420/1988) (HBV-B).